The primary structure comprises 497 residues: Alkane hydroxylase MAH1 (497 aa).

The chain crosses the membrane as a helical span at residues 3–23 (MLGFYVTFIFFLVCLFTYFFL). C444 contacts heme.

It belongs to the cytochrome P450 family. The cofactor is heme. As to expression, expressed in the expanding regions of the inflorescence stems, specifically to the epidermal pavement cells, petioles and siliques.

It localises to the endoplasmic reticulum membrane. Its function is as follows. Involved in the formation of secondary alcohols and ketones in stem cuticular wax. Catalyzes the hydroxylation of a methylene unit in the middle of alkane molecules to form secondary alcohols and possibly also a second hydroxylation leading to the corresponding ketones. The chain is Alkane hydroxylase MAH1 from Arabidopsis thaliana (Mouse-ear cress).